The chain runs to 407 residues: 4-hydroxy-3-methylbut-2-en-1-yl diphosphate synthase (ferredoxin) (407 aa).

Cys-312, Cys-315, Cys-346, and Glu-353 together coordinate [4Fe-4S] cluster.

The protein belongs to the IspG family. [4Fe-4S] cluster serves as cofactor.

It carries out the reaction (2E)-4-hydroxy-3-methylbut-2-enyl diphosphate + 2 oxidized [2Fe-2S]-[ferredoxin] + H2O = 2-C-methyl-D-erythritol 2,4-cyclic diphosphate + 2 reduced [2Fe-2S]-[ferredoxin] + H(+). It participates in isoprenoid biosynthesis; isopentenyl diphosphate biosynthesis via DXP pathway; isopentenyl diphosphate from 1-deoxy-D-xylulose 5-phosphate: step 5/6. Its function is as follows. Converts 2C-methyl-D-erythritol 2,4-cyclodiphosphate (ME-2,4cPP) into 1-hydroxy-2-methyl-2-(E)-butenyl 4-diphosphate. This is 4-hydroxy-3-methylbut-2-en-1-yl diphosphate synthase (ferredoxin) from Synechococcus elongatus (strain ATCC 33912 / PCC 7942 / FACHB-805) (Anacystis nidulans R2).